The sequence spans 532 residues: Intercellular adhesion molecule 1 (532 aa).

The signal sequence occupies residues 1-27; that stretch reads MAPSSPRPALPALLVLLGALFPGPGNA. Over 28–480 the chain is Extracellular; it reads QTSVSPPKVI…TVNVLSPRYE (453 aa). Ig-like C2-type domains follow at residues 41–103 and 128–193; these read GGSV…QSTA and GKDL…LDLR. Intrachain disulfides connect C48-C92, C52-C96, and C135-C186. An N-linked (GlcNAc...) asparagine glycan is attached at N145. The short motif at 152–154 is the Cell attachment site; atypical element; the sequence is RGE. N-linked (GlcNAc...) asparagine glycosylation is found at N183, N202, N267, and N296. Ig-like C2-type domains follow at residues 230–297 and 325–378; these read DTQG…LGNQ and GTEV…LEVA. Cysteines 237 and 290 form a disulfide. C332 and C371 are oxidised to a cystine. N-linked (GlcNAc...) asparagine glycans are attached at residues N385 and N406. Cystine bridges form between C403–C419, C419–C457, and C431–C457. Positions 412 to 464 constitute an Ig-like C2-type 5 domain; the sequence is NSQQTPMCQASGNPLPELKCLKDGTFPLPVGESVTVTRDLEGTYLCRARSTQG. A helical membrane pass occupies residues 481-503; sequence IVIITVVAAAVIMGTAGLSTYLY. At 504-532 the chain is on the cytoplasmic side; the sequence is NRQRKIRKYRLQQAQKGTPMKPNTQATPP. Phosphothreonine is present on residues T521 and T530.

This sequence belongs to the immunoglobulin superfamily. ICAM family. As to quaternary structure, homodimer. Interacts with MUC1 and promotes cell aggregation in epithelial cells. Interacts with ARHGEF26/SGEF. Interacts (on T cell side) with CD81, CD247 and CD9 at immunological synapses between antigen-presenting cells and T cells. Monoubiquitinated, which is promoted by MARCH9 and leads to endocytosis.

The protein resides in the membrane. In terms of biological role, ICAM proteins are ligands for the leukocyte adhesion protein LFA-1 (integrin alpha-L/beta-2). During leukocyte trans-endothelial migration, ICAM1 engagement promotes the assembly of endothelial apical cups through ARHGEF26/SGEF and RHOG activation. The chain is Intercellular adhesion molecule 1 (ICAM1) from Pan troglodytes (Chimpanzee).